A 251-amino-acid chain; its full sequence is HTH-type transcriptional regulator UlaR (251 aa).

One can recognise an HTH deoR-type domain in the interval 3–58; it reads EAQRHQILLDMLAQLGFVTVENVIERLGISPATARRDINKLDESGKLKKVRNGAEA. The segment at residues 20–39 is a DNA-binding region (H-T-H motif); that stretch reads VTVENVIERLGISPATARRD.

It is found in the cytoplasm. Its function is as follows. Represses ulaG and the ulaABCDEF operon. This Salmonella arizonae (strain ATCC BAA-731 / CDC346-86 / RSK2980) protein is HTH-type transcriptional regulator UlaR.